The following is a 351-amino-acid chain: L-threonine 3-dehydrogenase (351 aa).

Residue C39 participates in Zn(2+) binding. Residues T41 and H44 each act as charge relay system in the active site. Residues H64, E65, C94, C97, C100, and C108 each contribute to the Zn(2+) site. Residues I176, D196, R201, 271–273, and 295–296 contribute to the NAD(+) site; these read LGI and IY.

Belongs to the zinc-containing alcohol dehydrogenase family. Homotetramer. Zn(2+) is required as a cofactor.

It is found in the cytoplasm. It carries out the reaction L-threonine + NAD(+) = (2S)-2-amino-3-oxobutanoate + NADH + H(+). It participates in amino-acid degradation; L-threonine degradation via oxydo-reductase pathway; glycine from L-threonine: step 1/2. Functionally, catalyzes the NAD(+)-dependent oxidation of L-threonine to 2-amino-3-ketobutyrate. This chain is L-threonine 3-dehydrogenase, found in Francisella tularensis subsp. holarctica (strain OSU18).